The sequence spans 339 residues: MGEAVEVMFGNGFPEIHKATSPTQTLHSNQQDCHWYEETIDDDLKWSFALNSVLHQGTSEYQDIALLDTKRFGKVLVIDGKMQSAERDEFIYHECLIHPALLFHPNPKTVFIMGGGEGSAAREILKHTTIEKVVMCDIDQEVVDFCRRFLTVNSDAFCNKKLELVIKDAKAELEKREEKFDIIVGDLADPVEGGPCYQLYTKSFYQNILKPKLSPNGIFVTQAGPAGIFTHKEVFTSIYNTMKQVFKYVKAYTAHVPSFADTWGWVMASDHEFDVEVDEMDRRIEERVNGELMYLNAPSFVSAATLNKTISLALEKETEVYSEENARFIHGHGVAYRHI.

The 238-residue stretch at Cys-33–Asp-270 folds into the PABS domain. Residues Gln-62, Glu-117, Asp-137, and Asp-168–Ala-169 each bind S-adenosyl 3-(methylsulfanyl)propylamine. Catalysis depends on Asp-186, which acts as the Proton acceptor.

Belongs to the spermidine/spermine synthase family. Highly expressed in stem internodes and roots. Lower levels in young seedlings before flowering and rosette leaves. Expressed in the vascular tissues. Restricted to procambial and/or provascular cells during primary root development and early leaves development.

It catalyses the reaction S-adenosyl 3-(methylsulfanyl)propylamine + spermidine = thermospermine + S-methyl-5'-thioadenosine + H(+). Its function is as follows. Required for correct xylem specification through regulation of the lifetime of the xylem elements. Prevents premature death of the xylem vessel elements. This Arabidopsis thaliana (Mouse-ear cress) protein is Thermospermine synthase ACAULIS5 (ACL5).